Reading from the N-terminus, the 472-residue chain is Methanethiol oxidase (472 aa).

It belongs to the selenium-binding protein family.

The protein localises to the nucleus. It localises to the cytoplasm. It is found in the cytosol. The protein resides in the membrane. It carries out the reaction methanethiol + O2 + H2O = hydrogen sulfide + formaldehyde + H2O2 + H(+). It functions in the pathway organosulfur degradation. Its function is as follows. Catalyzes the oxidation of methanethiol, an organosulfur compound known to be produced in substantial amounts by gut bacteria. Selenium-binding protein which may be involved in the sensing of reactive xenobiotics in the cytoplasm. May be involved in intra-Golgi protein transport. The sequence is that of Methanethiol oxidase (selenbp1) from Xenopus tropicalis (Western clawed frog).